Consider the following 594-residue polypeptide: E3 ubiquitin-protein ligase TRAF7 (594 aa).

A disordered region spans residues 1–33 (MPPINTPRRSDSAISVRSLHSESSMSLRSTFSL). Residues serine 12 and serine 15 each carry the phosphoserine modification. A compositionally biased stretch (low complexity) spans 15-29 (SVRSLHSESSMSLRS). The RING-type zinc finger occupies 55–89 (CQLCCSVFKDPVITTCGHTFCRRCALKSEKCPVDN). A TRAF-type zinc finger spans residues 146-216 (HESSCDYRPV…RFEGLKEFLQ (71 aa)). WD repeat units lie at residues 318–357 (GHQGPVWCLCVYSMGDLLFSGSSDKTIKVWDTCTTYKCQK), 361–398 (GHDGIVLALCIQGCKLYSGSADCTIIVWDIQNLQKVNT), 401–437 (AHDNPVCTLVSSHNMLFSGSLKAIKVWDIVGTELKLK), 439–478 (ELTGLNHWVRALVAAQSYLYSGSYQTIKIWDIRTLDCIHV), 481–518 (TSGGSVYSIAVTNHHIVCGTYENLIHVWDIESKEQVRT), 521–562 (GHVG…CTQT), and 565–593 (RHQGSVTALAVSRGRLFSGAVDSTVKVWT).

Belongs to the WD repeat TRAF7 family. Homodimer. Interacts with MAP3K3 and promotes the kinase activity of this enzyme. Phosphorylated by MAP3K3. In terms of processing, ubiquitinates itself upon phosphorylation. As to expression, ubiquitously expressed. Expression is relatively high in heart, liver, kidney, testis, prostate, thyroid, and salivary gland.

Its subcellular location is the cytoplasmic vesicle. The protein localises to the cytoplasm. It localises to the nucleus. It carries out the reaction S-ubiquitinyl-[E2 ubiquitin-conjugating enzyme]-L-cysteine + [acceptor protein]-L-lysine = [E2 ubiquitin-conjugating enzyme]-L-cysteine + N(6)-ubiquitinyl-[acceptor protein]-L-lysine.. Its pathway is protein modification; protein ubiquitination. E3 ubiquitin and SUMO-protein ligase that plays a role in different biological processes such as innate immunity, inflammation or apoptosis. Potentiates MAP3K3-mediated activation of the NF-kappa-B, JUN/AP1 and DDIT3 transcriptional regulators. Negatively regulates MYB transcriptional activity by sequestering it to the cytosol via SUMOylation. Plays a role in the phosphorylation of MAPK1 and/or MAPK3, probably via its interaction with MAP3K3. Negatively regulates RLR-mediated innate immunity by promoting 'Lys-48'-linked ubiquitination of TBK1 through its RING domain to inhibit the cellular antiviral response. Promotes 'Lys-29'-linked polyubiquitination of NEMO/IKBKG and RELA leading to targeting these two proteins to lysosomal degradative pathways, reducing the transcriptional activity of NF-kappa-B. This is E3 ubiquitin-protein ligase TRAF7 from Mus musculus (Mouse).